Reading from the N-terminus, the 66-residue chain is Large ribosomal subunit protein bL35 (66 aa).

It belongs to the bacterial ribosomal protein bL35 family.

In Hyphomonas neptunium (strain ATCC 15444), this protein is Large ribosomal subunit protein bL35.